A 453-amino-acid polypeptide reads, in one-letter code: Zinc finger protein Pegasus (453 aa).

C2H2-type zinc fingers lie at residues 101–123, 129–151, and 157–180; these read LKCR…IRIH, HRCH…MRSH, and YKCE…RRKH. A compositionally biased stretch (polar residues) spans 279–293; sequence GQLSSLPPDTQNPAS. The interval 279 to 375 is disordered; it reads GQLSSLPPDT…QPSTPAPALP (97 aa). A compositionally biased stretch (low complexity) spans 315–332; the sequence is CSSAVSTSVAQSSSPASP. Polar residues predominate over residues 356–368; sequence RTSTPSISNSQPS. C2H2-type zinc fingers lie at residues 383–405 and 411–438; these read HHCQ…MGCH and FQCN…CCQH.

Belongs to the Ikaros C2H2-type zinc-finger protein family. As to quaternary structure, probably self-associates.

It localises to the nucleus. Transcriptional repressor that binds the core 5'GNNTGTNG-3' DNA consensus sequence. The protein is Zinc finger protein Pegasus (ikzf5) of Xenopus laevis (African clawed frog).